Here is a 546-residue protein sequence, read N- to C-terminus: Chaperonin GroEL (546 aa).

Residues 30-33 (TLGP), Lys51, 87-91 (DGTTT), Gly415, and Asp495 each bind ATP.

It belongs to the chaperonin (HSP60) family. As to quaternary structure, forms a cylinder of 14 subunits composed of two heptameric rings stacked back-to-back. Interacts with the co-chaperonin GroES.

Its subcellular location is the cytoplasm. The catalysed reaction is ATP + H2O + a folded polypeptide = ADP + phosphate + an unfolded polypeptide.. Its function is as follows. Together with its co-chaperonin GroES, plays an essential role in assisting protein folding. The GroEL-GroES system forms a nano-cage that allows encapsulation of the non-native substrate proteins and provides a physical environment optimized to promote and accelerate protein folding. This chain is Chaperonin GroEL, found in Brucella melitensis biotype 2 (strain ATCC 23457).